The sequence spans 547 residues: Probable bifunctional tRNA threonylcarbamoyladenosine biosynthesis protein (547 aa).

Positions 1–329 (MGNSNELICI…FRTDMVDVNW (329 aa)) are kae1. Fe cation-binding residues include His112, His116, and Tyr133. Residues 133–137 (YVSGG), Asp165, Gly178, Glu182, and Asn262 each bind L-threonylcarbamoyladenylate. Residue Asp290 coordinates Fe cation. Residues 346–547 (QIPRHLIGKG…KEVEKRGRYL (202 aa)) form the Protein kinase domain. ATP contacts are provided by residues 352 to 360 (IGKGAEADI) and Lys373. The active-site Proton acceptor; for kinase activity is Asp465.

The protein in the N-terminal section; belongs to the KAE1 / TsaD family. This sequence in the C-terminal section; belongs to the protein kinase superfamily. Tyr protein kinase family. BUD32 subfamily. As to quaternary structure, component of the KEOPS complex that consists of Kae1, Bud32, Cgi121 and Pcc1; the whole complex dimerizes. Fe(2+) is required as a cofactor.

The protein resides in the cytoplasm. The catalysed reaction is L-seryl-[protein] + ATP = O-phospho-L-seryl-[protein] + ADP + H(+). It carries out the reaction L-threonyl-[protein] + ATP = O-phospho-L-threonyl-[protein] + ADP + H(+). It catalyses the reaction L-threonylcarbamoyladenylate + adenosine(37) in tRNA = N(6)-L-threonylcarbamoyladenosine(37) in tRNA + AMP + H(+). In terms of biological role, required for the formation of a threonylcarbamoyl group on adenosine at position 37 (t(6)A37) in tRNAs that read codons beginning with adenine. Is a component of the KEOPS complex that is probably involved in the transfer of the threonylcarbamoyl moiety of threonylcarbamoyl-AMP (TC-AMP) to the N6 group of A37. The Kae1 domain likely plays a direct catalytic role in this reaction. The Bud32 domain probably displays kinase activity that regulates Kae1 function. The polypeptide is Probable bifunctional tRNA threonylcarbamoyladenosine biosynthesis protein (Methanococcus vannielii (strain ATCC 35089 / DSM 1224 / JCM 13029 / OCM 148 / SB)).